A 230-amino-acid polypeptide reads, in one-letter code: uncharacterized protein (230 aa).

The 229-residue stretch at 2 to 230 (IQLSNVRKSY…ASSGQRSVGE (229 aa)) folds into the ABC transporter domain. ATP is bound at residue 38-45 (GPSGSGKS).

This sequence belongs to the ABC transporter superfamily. In terms of assembly, part of a complex composed of YknX, YknY and YknZ. The complex interacts with YknW.

Its subcellular location is the cell membrane. Its function is as follows. Part of an unusual four-component transporter, which is required for protection against the killing factor SdpC (sporulation-delaying protein). This is an uncharacterized protein from Bacillus subtilis (strain 168).